Reading from the N-terminus, the 397-residue chain is Succinyl-diaminopimelate desuccinylase (397 aa).

Position 73 (H73) interacts with Zn(2+). Residue D75 is part of the active site. D106 provides a ligand contact to Zn(2+). E140 serves as the catalytic Proton acceptor. Zn(2+) is bound by residues E141, E169, and H366.

Belongs to the peptidase M20A family. DapE subfamily. As to quaternary structure, homodimer. Requires Zn(2+) as cofactor. Co(2+) serves as cofactor.

It carries out the reaction N-succinyl-(2S,6S)-2,6-diaminopimelate + H2O = (2S,6S)-2,6-diaminopimelate + succinate. It functions in the pathway amino-acid biosynthesis; L-lysine biosynthesis via DAP pathway; LL-2,6-diaminopimelate from (S)-tetrahydrodipicolinate (succinylase route): step 3/3. Its function is as follows. Catalyzes the hydrolysis of N-succinyl-L,L-diaminopimelic acid (SDAP), forming succinate and LL-2,6-diaminopimelate (DAP), an intermediate involved in the bacterial biosynthesis of lysine and meso-diaminopimelic acid, an essential component of bacterial cell walls. The sequence is that of Succinyl-diaminopimelate desuccinylase from Rhizobium johnstonii (strain DSM 114642 / LMG 32736 / 3841) (Rhizobium leguminosarum bv. viciae).